The following is an 85-amino-acid chain: Large ribosomal subunit protein bL27 (85 aa).

The protein belongs to the bacterial ribosomal protein bL27 family.

In Sodalis glossinidius (strain morsitans), this protein is Large ribosomal subunit protein bL27.